We begin with the raw amino-acid sequence, 326 residues long: Probable GTP 3',8-cyclase (326 aa).

The Radical SAM core domain maps to 6-235 (LYGRPVLSLR…NRPRYIIRTQ (230 aa)). Arg15 is a GTP binding site. Positions 22, 26, and 29 each coordinate [4Fe-4S] cluster. Residue Lys62 participates in GTP binding. An S-adenosyl-L-methionine-binding site is contributed by Gly66. Thr92 provides a ligand contact to GTP. Ser116 lines the S-adenosyl-L-methionine pocket. Lys153 contacts GTP. [4Fe-4S] cluster contacts are provided by Cys253 and Cys256. 258–260 (RLR) serves as a coordination point for GTP. Residue Cys270 participates in [4Fe-4S] cluster binding.

This sequence belongs to the radical SAM superfamily. MoaA family. It depends on [4Fe-4S] cluster as a cofactor.

It carries out the reaction GTP + AH2 + S-adenosyl-L-methionine = (8S)-3',8-cyclo-7,8-dihydroguanosine 5'-triphosphate + 5'-deoxyadenosine + L-methionine + A + H(+). It functions in the pathway cofactor biosynthesis; molybdopterin biosynthesis. Its function is as follows. Catalyzes the cyclization of GTP to (8S)-3',8-cyclo-7,8-dihydroguanosine 5'-triphosphate. The protein is Probable GTP 3',8-cyclase of Thermoplasma volcanium (strain ATCC 51530 / DSM 4299 / JCM 9571 / NBRC 15438 / GSS1).